We begin with the raw amino-acid sequence, 264 residues long: Interleukin-33 (264 aa).

The tract at residues 1–67 is homeodomain-like HTH domain; the sequence is MRPRMKYSNS…ETCYFGKEPA (67 aa). A propeptide spanning residues 1-101 is cleaved from the precursor; it reads MRPRMKYSNS…RSLLGSIQAF (101 aa). Positions 66 to 108 are interaction with RELA; the sequence is PAKRYSLKSGSKHEGRLSTCLPDSRKRSLLGSIQAFAASVDTL.

This sequence belongs to the IL-1 family. Highly divergent. In terms of assembly, forms a 1:1:1 heterotrimeric complex with its primary high-affinity receptor IL1RL1 and the coreceptor IL1RAP. Interacts with cargo receptor TMED10; the interaction mediates the translocation from the cytoplasm into the ERGIC (endoplasmic reticulum-Golgi intermediate compartment) and thereby secretion. Post-translationally, the full-length protein can be released from cells and is able to signal via the IL1RL1/ST2 receptor. However, proteolytic processing by CELA1, CSTG/cathepsin G and ELANE/neutrophil elastase produces C-terminal peptides that are more active than the unprocessed full-length protein. May also be proteolytically processed by calpains. Proteolytic cleavage mediated by apoptotic caspases including CASP3 and CASP7 results in IL33 inactivation. In vitro proteolytic cleavage by CASP1 was reported but could not be confirmed in vivo suggesting that IL33 is probably not a direct substrate for that caspase.

The protein localises to the nucleus. The protein resides in the chromosome. Its subcellular location is the cytoplasm. It localises to the cytoplasmic vesicle. It is found in the secretory vesicle. The protein localises to the secreted. Its function is as follows. Cytokine that binds to and signals through the IL1RL1/ST2 receptor which in turn activates NF-kappa-B and MAPK signaling pathways in target cells. Involved in the maturation of Th2 cells inducing the secretion of T-helper type 2-associated cytokines. Also involved in activation of mast cells, basophils, eosinophils and natural killer cells. Acts as a chemoattractant for Th2 cells, and may function as an 'alarmin', that amplifies immune responses during tissue injury. Induces rapid UCP2-dependent mitochondrial rewiring that attenuates the generation of reactive oxygen species and preserves the integrity of Krebs cycle required for persistent production of itaconate and subsequent GATA3-dependent differentiation of inflammation-resolving alternatively activated macrophages. Functionally, in quiescent endothelia the uncleaved form is constitutively and abundantly expressed, and acts as a chromatin-associated nuclear factor with transcriptional repressor properties, it may sequester nuclear NF-kappaB/RELA, lowering expression of its targets. This form is rapidely lost upon angiogenic or pro-inflammatory activation. This chain is Interleukin-33, found in Rattus norvegicus (Rat).